Here is a 223-residue protein sequence, read N- to C-terminus: Deoxyribose-phosphate aldolase 2 (223 aa).

Asp-89 serves as the catalytic Proton donor/acceptor. The active-site Schiff-base intermediate with acetaldehyde is the Lys-152. The active-site Proton donor/acceptor is the Lys-181.

The protein belongs to the DeoC/FbaB aldolase family. DeoC type 1 subfamily.

Its subcellular location is the cytoplasm. It carries out the reaction 2-deoxy-D-ribose 5-phosphate = D-glyceraldehyde 3-phosphate + acetaldehyde. Its pathway is carbohydrate degradation; 2-deoxy-D-ribose 1-phosphate degradation; D-glyceraldehyde 3-phosphate and acetaldehyde from 2-deoxy-alpha-D-ribose 1-phosphate: step 2/2. Catalyzes a reversible aldol reaction between acetaldehyde and D-glyceraldehyde 3-phosphate to generate 2-deoxy-D-ribose 5-phosphate. The protein is Deoxyribose-phosphate aldolase 2 of Bacillus licheniformis (strain ATCC 14580 / DSM 13 / JCM 2505 / CCUG 7422 / NBRC 12200 / NCIMB 9375 / NCTC 10341 / NRRL NRS-1264 / Gibson 46).